A 422-amino-acid polypeptide reads, in one-letter code: MSSQVVGIEPLYIKAEPASPDSPKGSSETETEPPVTLASGPAPARCLPGHKEEEDGEGAGSGEQGSGKLVLSSLPKRLCLVCGDVASGYHYGVASCEACKAFFKRTIQGSIEYSCPASNECEITKRRRKACQACRFTKCLRVGMLKEGVRLDRVRGGRQKYKRRPEVDPLPFPGPFPAGPLAVAGGPRKTAPVNALVSHLLVVEPEKLYAMPDPASPDGHLPAVATLCDLFDREIVVTISWAKSIPGFSSLSLSDQMSVLQSVWMEVLVLGVAQRSLPLQDELAFAEDLVLDEEGARAAGLGDLGAALLQLVRRLQALRLEREEYVLLKALALANSDSVHIEDAEAVEQLREALHEALLEYEAGRAGPGGGAERRRAGRLLLTLPLLRQTAGKVLAHFYGVKLEGKVPMHKLFLEMLEAMMD.

A disordered region spans residues 1–66; sequence MSSQVVGIEP…EGAGSGEQGS (66 aa). The segment at 1-76 is repressor domain; the sequence is MSSQVVGIEP…GKLVLSSLPK (76 aa). A Glycyl lysine isopeptide (Lys-Gly) (interchain with G-Cter in SUMO) cross-link involves residue Lys14. Ser19 and Ser22 each carry phosphoserine. Positions 76–151 form a DNA-binding region, nuclear receptor; that stretch reads KRLCLVCGDV…VGMLKEGVRL (76 aa). 2 consecutive NR C4-type zinc fingers follow at residues 79–99 and 115–134; these read CLVC…CEAC and CPAS…CQAC. N6-acetyllysine; by PCAF/KAT2B is present on residues Lys129, Lys138, Lys160, and Lys162. A Glycyl lysine isopeptide (Lys-Gly) (interchain with G-Cter in SUMO2) cross-link involves residue Lys189. The NR LBD domain occupies 192–420; the sequence is PVNALVSHLL…KLFLEMLEAM (229 aa). Residue Lys402 forms a Glycyl lysine isopeptide (Lys-Gly) (interchain with G-Cter in SUMO); alternate linkage. Residue Lys402 forms a Glycyl lysine isopeptide (Lys-Gly) (interchain with G-Cter in SUMO2); alternate linkage. The interval 402 to 422 is AF-2 domain; that stretch reads KLEGKVPMHKLFLEMLEAMMD.

This sequence belongs to the nuclear hormone receptor family. NR3 subfamily. In terms of assembly, binds DNA as a monomer or a homodimer. Interacts (via the AF2 domain) with coactivator PPARGC1A (via the L3 motif); the interaction greatly enhances transcriptional activity of genes involved in energy metabolism. Interacts with PIAS4; the interaction enhances sumoylation. Interacts with MAPK15; promotes re-localization of ESRRA to the cytoplasm through a XPO1-dependent mechanism then inhibits ESRRA transcriptional activity. Phosphorylation on Ser-19 enhances sumoylation on Lys-14 increasing repression of transcriptional activity. Post-translationally, sumoylated with SUMO2. Main site is Lys-14 which is enhanced by phosphorylation on Ser-19, cofactor activation, and by interaction with PIAS4. Sumoylation enhances repression of transcriptional activity, but has no effect on subcellular location nor on DNA binding. In terms of processing, reversibly acetylated. Acetylation by PCAF/KAT2 at Lys-129, Lys-138, Lys-160 and Lys-162 and PCAF/KAT2 decreases transcriptional activity probably by inhibiting DNA-binding activity; deacetylation involves SIRT1 and HDAC8 and increases DNA-binding. Most highly expressed in kidney, heart, and brown adipocytes. Also found in uterus, cervix and vagina.

The protein localises to the nucleus. It is found in the cytoplasm. Functionally, binds to an ERR-alpha response element (ERRE) containing a single consensus half-site, 5'-TNAAGGTCA-3'. Can bind to the medium-chain acyl coenzyme A dehydrogenase (MCAD) response element NRRE-1 and may act as an important regulator of MCAD promoter. Binds to the C1 region of the lactoferrin gene promoter. Requires dimerization and the coactivator, PGC-1A, for full activity. The ERRalpha/PGC1alpha complex is a regulator of energy metabolism. Induces the expression of PERM1 in the skeletal muscle. The protein is Steroid hormone receptor ERR1 (Esrra) of Mus musculus (Mouse).